We begin with the raw amino-acid sequence, 111 residues long: Nucleoid-associated protein LBA0378 (111 aa).

Belongs to the YbaB/EbfC family. Homodimer.

Its subcellular location is the cytoplasm. It is found in the nucleoid. Functionally, binds to DNA and alters its conformation. May be involved in regulation of gene expression, nucleoid organization and DNA protection. This chain is Nucleoid-associated protein LBA0378, found in Lactobacillus acidophilus (strain ATCC 700396 / NCK56 / N2 / NCFM).